The primary structure comprises 612 residues: Rhotekin-2 (612 aa).

One can recognise an REM-1 domain in the interval 3-79 (IKRKKIRESA…LRSQMGESNT (77 aa)). The PH domain occupies 285–392 (DEAMMGFLNQ…WMEAFWQHFY (108 aa)). 2 disordered regions span residues 483-530 (RNKP…SDKE) and 574-612 (ENKA…QSQV). Positions 486 to 498 (PPLLSSDDPSTSS) are enriched in low complexity.

The protein is Rhotekin-2 (rtkn2) of Xenopus laevis (African clawed frog).